The chain runs to 506 residues: Exopolysaccharide phosphotransferase NFA_48680 (506 aa).

The segment at 484–506 (PAPWERVSAPSRRPLPESTAGAA) is disordered.

Belongs to the stealth family.

This chain is Exopolysaccharide phosphotransferase NFA_48680, found in Nocardia farcinica (strain IFM 10152).